Consider the following 130-residue polypeptide: RutC family protein in leuC 5'region (130 aa).

The protein belongs to the RutC family.

The protein is RutC family protein in leuC 5'region of Leuconostoc mesenteroides subsp. cremoris.